The following is a 136-amino-acid chain: Large ribosomal subunit protein uL16c (136 aa).

The interval Met1–Lys20 is disordered.

This sequence belongs to the universal ribosomal protein uL16 family. Part of the 50S ribosomal subunit.

Its subcellular location is the plastid. The protein localises to the chloroplast. This chain is Large ribosomal subunit protein uL16c, found in Triticum aestivum (Wheat).